Consider the following 520-residue polypeptide: Hydroxymethylglutaryl-CoA synthase, cytoplasmic (520 aa).

Residue serine 4 is modified to Phosphoserine. (3S)-3-hydroxy-3-methylglutaryl-CoA is bound by residues aspartate 43 and alanine 44. Alanine 44–lysine 46 is a binding site for CoA. Lysine 46 carries the post-translational modification N6-acetyllysine. Glutamate 95 (proton donor/acceptor) is an active-site residue. (3S)-3-hydroxy-3-methylglutaryl-CoA is bound by residues cysteine 129, asparagine 167, threonine 171, serine 221, and histidine 264. The Acyl-thioester intermediate role is filled by cysteine 129. Residue asparagine 167 participates in CoA binding. Position 221 (serine 221) interacts with CoA. Residue histidine 264 is the Proton donor/acceptor of the active site. Residues lysine 269 and lysine 273 each coordinate CoA. Residues lysine 273, asparagine 343, and serine 377 each coordinate (3S)-3-hydroxy-3-methylglutaryl-CoA. Residue lysine 273 is modified to N6-acetyllysine. Threonine 476 bears the Phosphothreonine mark. The interval histidine 492–histidine 520 is disordered. Phosphoserine is present on residues serine 495 and serine 516.

The protein belongs to the thiolase-like superfamily. HMG-CoA synthase family. Homodimer.

It is found in the cytoplasm. It catalyses the reaction acetoacetyl-CoA + acetyl-CoA + H2O = (3S)-3-hydroxy-3-methylglutaryl-CoA + CoA + H(+). It functions in the pathway metabolic intermediate biosynthesis; (R)-mevalonate biosynthesis; (R)-mevalonate from acetyl-CoA: step 2/3. In terms of biological role, catalyzes the condensation of acetyl-CoA with acetoacetyl-CoA to form HMG-CoA, which is converted by HMG-CoA reductase (HMGCR) into mevalonate, a precursor for cholesterol synthesis. This is Hydroxymethylglutaryl-CoA synthase, cytoplasmic from Homo sapiens (Human).